Reading from the N-terminus, the 247-residue chain is LOB domain-containing protein 38 (247 aa).

Residues 1 to 107 enclose the LOB domain; that stretch reads MSCNGCRVLR…VETVLRGGSL (107 aa). The segment covering 157-170 has biased composition (low complexity); sequence FSSSRSRSRSTASP. Residues 157 to 184 form a disordered region; it reads FSSSRSRSRSTASPPKRKRLSSEQQPSS.

It belongs to the LOB domain-containing protein family. In terms of tissue distribution, expressed in young shoots, roots, stems, leaves and flowers.

The chain is LOB domain-containing protein 38 (LBD38) from Arabidopsis thaliana (Mouse-ear cress).